A 2409-amino-acid polypeptide reads, in one-letter code: MTLSNGSNGANGTSNGHGAHPSANGFHNAANGGANNGTPNGGAEYNASLPQVDGDISSAIAVIGVSGRFPGDATSPRHLWDLLKEGRNALSDVPESRFNIDGFYHPDGGRAGTLNTKQGYFLKSDVDKFDAGFFSITPEEARGMDPTQRILLELAYEGLENAGLKIDEVANQHMSCYIGACQHDYWDLQAYDMDSAPKYTATGTGPALLSNRISWFFNLKGPSVTIDTACSSTLTALHLAGQSIRNGESDSALVGGLGLHLLPNFGVFMSSMSFLSADNKCHSFDASANGYARAEGGGFVVLKRLDKALADGDTIRAVLRSTGSNQDGRTLGITQPSASRQEELIRATYASAGLTFDKTNFFEAHGTGTKVGDPIECSVIGNVFGKTRERPVYVGSVKSNIGHLEGASGLAGLVKTIYSLESGVISPTYGLENVNPKIKLDEWKINLPTEKIKWPAGLRRASINSFGYGGANAHAVLDDAYHFLKTHNLEGHHNTKAEDVPATGLIGNGSQDIIEKTDKKPRLFLISSHEESGIARLSQTLQAYLADPAARDLPEDQFLHRLAYTLSEKRSSLPWKTYAAASTIEELQQALDGAPTKAARVPRSQALTFIFTGQGAQWFAMGRELQKYPIFRQSLHACSQYLKDFGSTWDLVEELNRDAKESIIDLPYVSQPSCTALQLSIIDLLASWGIHPQVTVGHSSGEIAAAYAKGAFDKEAAMRIAYFRGHLTGNITKTGSMAAVGLGPERVSEYLSRVTAGKIVVACINSPASVTLSGDVEGIDEVLTFLQADDIFARKLRVTTAYHSHHMQQISEEYLNSLSGKWELKPGNPKVRMFSSVSAKPIDGTELGPAYWVANLVSPVNFSGAVTAAANAGALGKRKASGKKGSADAMVEIGPHAALQGPLKQILDSIGDKGASPKYFSAIKRKQDAIQTTLEVVGELLVLGHQVNVPLVNAYTETTSALVDLPPYAWNTTNSYWHESAAVTAYKQRKHPRLELLGVRDPRSTKAEPAWHNYLRISEQPWIEHHQFQNTNIYPMAGMIVMAIEGLRQVETRTDVEGYTIRDVNIGSALVVPLDQTIETRLQLTPWRSGPNVSWSHWTEFTVSSRNESGSWTTNCTGLVSTSYKRETNSTFLDEEAAANALLSQEYKAISNSDLPSVDPTVFYTKLDESGFSLGPAFRGVKELNLFDHKAHFSMEVIDTKDFYPKKWEPAHLIHPAVLDVFVHLLISSTGDAAEIKARVPVSTASLYISADFDSTSGTKYHGFSTSKKHGATNMLSNVIAFAEGGSKPLIALEGCKTVPLRGASDPSSGDGQSLGHVPVVPKKVVDVDISDAVTLEKLLQGTDFASKLGSYLSLLGQKRPGLSVLEYSSSTSSILLRALTAQAEELQGSITSVALTTPLDGPADEETSVPEAWKNKVQQEKLDLTQDPSTQGFEDVALDVIFIDVEEQGDISLVLKNAKKILKPSGILLITNHASAISTDLLTSTDLTSTTVSELIIARHKPDTDPSDHQVLIVTPPSPSSGLSKLIAQAENDLTSQGYEVNKADFANIPEQTTPFLTLSALDVDTPFLESFHHETFTKLRSLFLASRGTLWLTLDTASRGLVNGLGRTIRAEHPDISFTVLSLDALTSLDSALNTKTISSIIENMSRKTFGETSDSEYVIRNNQVLVERLIPNPDLKALLDSSKTGNNLSAVKVPLKQVNKPLQLSIRDPGLLDTLEYLSVPDLFEPLGDNQIEIEVGSVGLNFRDVMVAMGQMEDNTLGIECAGVVAKVGAGVQKFKVGDRVFGMHAGCFQTRVRVDPRTFQRTPEHLGDEEAASLMCTSATVVHSLIDVARLQRGESVLIHSAAGGVGQAAIRLAKYLGAEIFATVSSEKKKRLLIEDYGVKESHIFNSRDYSFADGILRLTNQRGVDVVINSLAGEALRRTWLCVAPFGRFIELGKRDIYDNSGLDMRPFLDNITFSGLDILTQVISYPDRFEAIGNQVVELLSKNAISPLNNLARYSFGEVSKAFRLMQSGGHVGKIVLYPRPDDIVPIVPEGLESFCLPHDATYVLIGGLGGIGRSVTRLLVERGARHLVFLSRSAAARPEAQALLDELHAQGVQAKAFAVDVAEKSQLEPVINDVKQSFPAIKGLIHCAMDLRDAVYSNMTADDWNASLRPKLLATRNLHDLLPTDLDFFICLSSIAGIIGSRGQANYNAGNTYQDALAHHRAASGLAATSINLSLVVGIGVSTERSEVFQLLKDGGLLGMDENDVLNVIKAAISGCAPTQVALGASTGGQLDKLAANDPYWFADSRFAVLNQLDRQGTGAVAGGQDWKKLLAAAASPDEVYEIVLQQLLEGVSKIIKADVEDMDSRKSLPALGIDSLVAIEIRTWLLKEFQADLSVFDIVSNDPLTGFAKKVMAKSVLIA.

A compositionally biased stretch (low complexity) spans 1–43; the sequence is MTLSNGSNGANGTSNGHGAHPSANGFHNAANGGANNGTPNGGA. The interval 1–49 is disordered; it reads MTLSNGSNGANGTSNGHGAHPSANGFHNAANGGANNGTPNGGAEYNASL. Positions 57–479 constitute a Ketosynthase family 3 (KS3) domain; the sequence is SSAIAVIGVS…GANAHAVLDD (423 aa). Residues cysteine 230, histidine 365, and histidine 403 each act as for beta-ketoacyl synthase activity in the active site. The tract at residues 608-929 is malonyl-CoA:ACP transacylase (MAT) domain; it reads TFIFTGQGAQ…FSAIKRKQDA (322 aa). Serine 699 functions as the For malonyltransferase activity in the catalytic mechanism. The interval 994-1127 is N-terminal hotdog fold; it reads LELLGVRDPR…GLVSTSYKRE (134 aa). Residues 994 to 1307 enclose the PKS/mFAS DH domain; it reads LELLGVRDPR…TVPLRGASDP (314 aa). The interval 995–1302 is dehydratase (DH) domain; that stretch reads ELLGVRDPRS…LEGCKTVPLR (308 aa). Histidine 1026 acts as the Proton acceptor; for dehydratase activity in catalysis. A C-terminal hotdog fold region spans residues 1155-1307; sequence LPSVDPTVFY…TVPLRGASDP (153 aa). Aspartate 1220 (proton donor; for dehydratase activity) is an active-site residue. The tract at residues 1713–2025 is enoyl reductase (ER) domain; the sequence is GLLDTLEYLS…SGGHVGKIVL (313 aa). Residues 2049–2225 are ketoreductase (KR) domain; it reads ATYVLIGGLG…AATSINLSLV (177 aa). In terms of domain architecture, Carrier spans 2328–2405; it reads EVYEIVLQQL…GFAKKVMAKS (78 aa). Serine 2365 carries the post-translational modification O-(pantetheine 4'-phosphoryl)serine.

The protein operates within mycotoxin biosynthesis. Functionally, reducing polyketide synthase; part of the gene cluster that mediates the biosynthesis of fusaric acid, a mycotoxin with low to moderate toxicity to animals and humans, but with high phytotoxic properties. L-aspartate is suggested as fusaric acid amino acid precursor that is activated and further processed to O-acetyl-L-homoserine by cluster enzymes aspartate kinase FUB3 and homoserine O-acetyltransferase FUB5, as well as enzymes of the primary metabolism. The polyketide synthase (PKS) FUB1 generates the triketide trans-2-hexenal which is presumptively released by the hydrolase FUB4 and linked to the NRPS-bound amino acid precursor by NAD(P)-dependent dehydrogenase FUB6. FUB1, FUB4, and the non-canonical NRPS Fub8 may form an enzyme complex. Further processing of the NRPS-bound intermediate might be carried out by FUB6 and the sulfhydrylase FUB7, enabling a spontaneous electrocyclization to close the carbon backbone of fusaric acid. Dihydrofusaric acid is likely to be released via reduction by the thioester reductase (TR) domain of FUB8 whereupon the final oxidation to fusaric acid may (also) be performed by the FMN-dependent dehydrogenase FUB9. This chain is Reducing polyketide synthase FUB1, found in Gibberella moniliformis (strain M3125 / FGSC 7600) (Maize ear and stalk rot fungus).